Consider the following 264-residue polypeptide: Energy-coupling factor transporter ATP-binding protein EcfA1 (264 aa).

The region spanning 2–234 (IQVENLSFSY…DEFNPFLIKI (233 aa)) is the ABC transporter domain. Position 34-41 (34-41 (GKNGSGKS)) interacts with ATP.

It belongs to the ABC transporter superfamily. Energy-coupling factor EcfA family. In terms of assembly, forms a stable energy-coupling factor (ECF) transporter complex composed of 2 membrane-embedded substrate-binding proteins (S component), 2 ATP-binding proteins (A component) and 2 transmembrane proteins (T component).

Its subcellular location is the cell inner membrane. In terms of biological role, ATP-binding (A) component of a common energy-coupling factor (ECF) ABC-transporter complex. Unlike classic ABC transporters this ECF transporter provides the energy necessary to transport a number of different substrates. The sequence is that of Energy-coupling factor transporter ATP-binding protein EcfA1 from Fusobacterium nucleatum subsp. nucleatum (strain ATCC 25586 / DSM 15643 / BCRC 10681 / CIP 101130 / JCM 8532 / KCTC 2640 / LMG 13131 / VPI 4355).